Here is a 96-residue protein sequence, read N- to C-terminus: Keratin-associated protein 12-3 (96 aa).

14 tandem repeats follow at residues 10–14, 15–19, 24–28, 30–34, 35–39, 45–49, 50–54, 55–59, 60–64, 70–74, 75–79, 80–84, 85–89, and 90–94. A 14 X 5 AA approximate repeats region spans residues 10–94; sequence CQPTCCIHSP…CRPISCSTPS (85 aa).

This sequence belongs to the KRTAP type 12 family. In terms of assembly, interacts with hair keratins. In terms of tissue distribution, restricted to a narrow region of the hair fiber cuticle, lying approximately 20 cell layers above the apex of the dermal papilla of the hair root; not detected in any other tissues.

Functionally, in the hair cortex, hair keratin intermediate filaments are embedded in an interfilamentous matrix, consisting of hair keratin-associated proteins (KRTAP), which are essential for the formation of a rigid and resistant hair shaft through their extensive disulfide bond cross-linking with abundant cysteine residues of hair keratins. The matrix proteins include the high-sulfur and high-glycine-tyrosine keratins. This chain is Keratin-associated protein 12-3 (KRTAP12-3), found in Homo sapiens (Human).